Reading from the N-terminus, the 514-residue chain is Protein nucleotidyltransferase YdiU (514 aa).

The ATP site is built by Gly111, Gly113, Arg114, Lys134, Asp146, Gly147, Arg197, and Arg204. Asp276 acts as the Proton acceptor in catalysis. Mg(2+)-binding residues include Asn277 and Asp286. Asp286 is a binding site for ATP.

Belongs to the SELO family. Requires Mg(2+) as cofactor. It depends on Mn(2+) as a cofactor.

The catalysed reaction is L-seryl-[protein] + ATP = 3-O-(5'-adenylyl)-L-seryl-[protein] + diphosphate. It carries out the reaction L-threonyl-[protein] + ATP = 3-O-(5'-adenylyl)-L-threonyl-[protein] + diphosphate. It catalyses the reaction L-tyrosyl-[protein] + ATP = O-(5'-adenylyl)-L-tyrosyl-[protein] + diphosphate. The enzyme catalyses L-histidyl-[protein] + UTP = N(tele)-(5'-uridylyl)-L-histidyl-[protein] + diphosphate. The catalysed reaction is L-seryl-[protein] + UTP = O-(5'-uridylyl)-L-seryl-[protein] + diphosphate. It carries out the reaction L-tyrosyl-[protein] + UTP = O-(5'-uridylyl)-L-tyrosyl-[protein] + diphosphate. Functionally, nucleotidyltransferase involved in the post-translational modification of proteins. It can catalyze the addition of adenosine monophosphate (AMP) or uridine monophosphate (UMP) to a protein, resulting in modifications known as AMPylation and UMPylation. The polypeptide is Protein nucleotidyltransferase YdiU (Rhodococcus jostii (strain RHA1)).